A 545-amino-acid polypeptide reads, in one-letter code: La-related protein 6B (545 aa).

A compositionally biased stretch (polar residues) spans Met-1 to Ser-10. Disordered regions lie at residues Met-1–Pro-76, Leu-105–Thr-187, and His-382–Glu-545. Residues Ser-23–Leu-49 are compositionally biased toward low complexity. Pro residues predominate over residues Thr-61–Pro-76. Residues His-111–His-126 are compositionally biased toward basic residues. A compositionally biased stretch (basic and acidic residues) spans Leu-154 to Gln-173. Over residues Val-174–Ser-185 the composition is skewed to polar residues. Positions Thr-187–Ala-278 constitute an HTH La-type RNA-binding domain. An RRM domain is found at Arg-285–Gln-383. Positions Gly-448–Gly-464 are enriched in basic residues. Positions Gln-465 to His-478 are enriched in low complexity. The segment covering Asn-479–Gln-497 has biased composition (basic residues). Positions Val-498–Asn-509 are enriched in polar residues. Residues Met-510–Gln-519 show a composition bias toward low complexity.

The protein resides in the nucleus. Functionally, transcriptional regulator. The polypeptide is La-related protein 6B (LARP6B) (Arabidopsis thaliana (Mouse-ear cress)).